We begin with the raw amino-acid sequence, 128 residues long: Small ribosomal subunit protein uS9 (128 aa).

The span at 97–113 shows a compositional bias: basic and acidic residues; sequence RSEGFMTRDSRSVERKK. The tract at residues 97 to 128 is disordered; that stretch reads RSEGFMTRDSRSVERKKPGQPKARRRFQFSKR. Basic residues predominate over residues 114 to 128; that stretch reads PGQPKARRRFQFSKR.

The protein belongs to the universal ribosomal protein uS9 family.

The protein is Small ribosomal subunit protein uS9 of Phocaeicola vulgatus (strain ATCC 8482 / DSM 1447 / JCM 5826 / CCUG 4940 / NBRC 14291 / NCTC 11154) (Bacteroides vulgatus).